A 252-amino-acid chain; its full sequence is Thiazole synthase (252 aa).

K98 (schiff-base intermediate with DXP) is an active-site residue. Residues G159, 185-186, and 207-208 each bind 1-deoxy-D-xylulose 5-phosphate; these read AG and AT.

It belongs to the ThiG family. In terms of assembly, homotetramer. Forms heterodimers with either ThiH or ThiS.

It localises to the cytoplasm. It catalyses the reaction [ThiS sulfur-carrier protein]-C-terminal-Gly-aminoethanethioate + 2-iminoacetate + 1-deoxy-D-xylulose 5-phosphate = [ThiS sulfur-carrier protein]-C-terminal Gly-Gly + 2-[(2R,5Z)-2-carboxy-4-methylthiazol-5(2H)-ylidene]ethyl phosphate + 2 H2O + H(+). Its pathway is cofactor biosynthesis; thiamine diphosphate biosynthesis. Catalyzes the rearrangement of 1-deoxy-D-xylulose 5-phosphate (DXP) to produce the thiazole phosphate moiety of thiamine. Sulfur is provided by the thiocarboxylate moiety of the carrier protein ThiS. In vitro, sulfur can be provided by H(2)S. This Mycobacterium avium (strain 104) protein is Thiazole synthase.